The primary structure comprises 165 residues: Anterior gradient protein 3 (165 aa).

The N-terminal stretch at 1–20 (MLHSALALCLLLITVSSNLA) is a signal peptide. The short motif at 162-165 (QSEL) is the Prevents secretion from ER element.

The protein belongs to the AGR family. Interacts with LYPD3 and DAG1 (alphaDAG1). In terms of tissue distribution, expressed in the ciliated cells of the airway epithelium. Not detected in the mucous cells.

It localises to the endoplasmic reticulum. The protein resides in the cytoplasm. Its function is as follows. Required for calcium-mediated regulation of ciliary beat frequency and mucociliary clearance in the airway. Might be involved in the regulation of intracellular calcium in tracheal epithelial cells. This is Anterior gradient protein 3 from Mus musculus (Mouse).